The chain runs to 460 residues: Hemopexin (460 aa).

Residues 1 to 23 (MARTVVALNILVLLGLCWSLAVA) form the signal peptide. N-linked (GlcNAc...) asparagine glycosylation is found at Asn38 and Asn64. Cystine bridges form between Cys50-Cys230, Cys148-Cys153, and Cys187-Cys199. Hemopexin repeat units follow at residues 53-93 (AWSF…WKNP), 94-138 (VTSV…FPGI), 139-183 (PYPP…SWPA), and 184-230 (VGNC…FISC). His79 lines the heme pocket. His149 provides a ligand contact to heme. A glycan (N-linked (GlcNAc...) asparagine) is linked at Asn186. His235 serves as a coordination point for heme. N-linked (GlcNAc...) asparagine glycans are attached at residues Asn240 and Asn246. 3 disulfides stabilise this stretch: Cys255-Cys458, Cys364-Cys406, and Cys416-Cys433. 4 Hemopexin repeats span residues 257–302 (ADPG…WPQG), 303–350 (PSAV…LGSP), 355–394 (LDTI…WAEL), and 398–448 (HEKV…SLPQ). His291 serves as a coordination point for heme.

This sequence belongs to the hemopexin family. As to expression, expressed by the liver and secreted in plasma.

Its subcellular location is the secreted. Its function is as follows. Binds heme and transports it to the liver for breakdown and iron recovery, after which the free hemopexin returns to the circulation. In Rattus norvegicus (Rat), this protein is Hemopexin (Hpx).